A 226-amino-acid chain; its full sequence is Ribosomal RNA large subunit methyltransferase E (226 aa).

Positions 1–25 are disordered; the sequence is MVKPPAGGNEGGRGKPARLKTAYGR. Positions 82, 84, 100, 116, and 140 each coordinate S-adenosyl-L-methionine. Lys180 acts as the Proton acceptor in catalysis.

This sequence belongs to the class I-like SAM-binding methyltransferase superfamily. RNA methyltransferase RlmE family.

It is found in the cytoplasm. The catalysed reaction is uridine(2552) in 23S rRNA + S-adenosyl-L-methionine = 2'-O-methyluridine(2552) in 23S rRNA + S-adenosyl-L-homocysteine + H(+). Its function is as follows. Specifically methylates the uridine in position 2552 of 23S rRNA at the 2'-O position of the ribose in the fully assembled 50S ribosomal subunit. The polypeptide is Ribosomal RNA large subunit methyltransferase E (Caulobacter vibrioides (strain ATCC 19089 / CIP 103742 / CB 15) (Caulobacter crescentus)).